Here is a 425-residue protein sequence, read N- to C-terminus: Type I restriction enzyme MjaVII specificity subunit (425 aa).

Residues K9–L168 form a target recognition domain 1 region. A central conserved region (CCR) region spans residues E169–T208. Positions E169–T208 form a coiled coil. Positions K209–L368 are target recognition domain 2. Positions E369 to T418 form a coiled coil. Positions E369–T418 are distal conserved region (DCR).

The protein belongs to the type-I restriction system S methylase family. As to quaternary structure, the type I restriction/modification system is composed of three polypeptides R, M and S.

The specificity (S) subunit of a type I restriction enzyme; this subunit dictates DNA sequence specificity. The M and S subunits together form a methyltransferase (MTase) that methylates A-3 on the top and bottom strands of the sequence 5'-CAAN(7)TGG-3'. In the presence of the R subunit the complex can also act as an endonuclease, binding to the same target sequence but cutting the DNA some distance from this site. Whether the DNA is cut or modified depends on the methylation state of the target sequence. When the target site is unmodified, the DNA is cut. When the target site is hemimethylated, the complex acts as a maintenance MTase modifying the DNA so that both strands become methylated. After locating a non-methylated recognition site, the enzyme complex serves as a molecular motor that translocates DNA in an ATP-dependent manner until a collision occurs that triggers cleavage. The polypeptide is Type I restriction enzyme MjaVII specificity subunit (Methanocaldococcus jannaschii (strain ATCC 43067 / DSM 2661 / JAL-1 / JCM 10045 / NBRC 100440) (Methanococcus jannaschii)).